Consider the following 198-residue polypeptide: MPLFGWMKWPKNDSYKPTHYPGSDIVTKTLLRELKWHLKERERLIQEIENEQKVKKTGVDYNWLRNYQNPHTTIPVTEQRQLEVLCSQVQPCQTGTILSRFREVLAENDVLPWEIVYIFKQVLKDFLSSSDRGSEQEDLEDSGSMDCSAPSVIQGDSSKRADKDEIPTISSYVDKNTKDRFPVFSHRIWNLPYYHPSS.

Positions 28–57 (KTLLRELKWHLKERERLIQEIENEQKVKKT) form a coiled coil. Residues 133 to 168 (GSEQEDLEDSGSMDCSAPSVIQGDSSKRADKDEIPT) form a disordered region. The span at 157 to 166 (SSKRADKDEI) shows a compositional bias: basic and acidic residues.

The sequence is that of Protein RD3-like (RD3L) from Homo sapiens (Human).